We begin with the raw amino-acid sequence, 200 residues long: V-set and transmembrane domain-containing protein 5 (200 aa).

The first 28 residues, 1–28 (MRPLPSGRRKTRGISLGLFALCLAAARC), serve as a signal peptide directing secretion. The Extracellular portion of the chain corresponds to 29-147 (LQSQGVSLYI…VSEILYEDLH (119 aa)). Residues 37–139 (YIPQATINAT…QFGTIVLHVS (103 aa)) enclose the Ig-like C2-type domain. N102 is a glycosylation site (N-linked (GlcNAc...) asparagine). The helical transmembrane segment at 148–168 (FVAVILAFLAAVAAVLISLMW) threads the bilayer. Topologically, residues 169–200 (VCNKCAYKFQRKRRHKLKESTTEEIELEDVEC) are cytoplasmic. The tract at residues 170-186 (CNKCAYKFQRKRRHKLK) is important for CDC42-dependent filopodia induction.

Can homooligomerize through cis interactions within the same cell membrane. Post-translationally, N-glycosylated.

Its subcellular location is the cell membrane. It localises to the cell projection. It is found in the dendrite. The protein localises to the axon. Functionally, cell adhesion-like membrane protein of the central nervous system (CNS) which modulates both the position and complexity of central neurons by altering their membrane morphology and dynamics. Involved in the formation of neuronal dendrites and protrusions including dendritic filopodia. In synaptogenesis, regulates synapse formation by altering dendritic spine morphology and actin distribution. Promotes formation of unstable neuronal spines such as thin and branched types. Regulates neuronal morphogenesis and migration during cortical development in the brain. This Homo sapiens (Human) protein is V-set and transmembrane domain-containing protein 5 (VSTM5).